The primary structure comprises 336 residues: MAMPTLDPNAPDFTRRYPNLADPRLGAVATFATDEFFAPKDRMLNPEPAVFIPGKYDDHGKWMDGWETRRRRNGGYDHCIVKLARPGVVKGVDIDTSHFTGNFPPAASIDAAYLPHGEPTDATQWTEIVPSTTLQGNSHHYLDVFGTHAYTHLRVNIYPDGGIARLRVYGQPQVDWKGADRATLFDLAAMENGAYVVEVNNQHFGLASSLLMPGRGINMGDGWETRRRREPGNDWCIIALAHPGRIRKIEVDTAHFKGNFADRVSLQAARVTGGTDATLKTQAMFWQTLLPEQKLQMDHQHYYEAELADLGPVTHVRFNMFPDGGVSRLRLWGALE.

The protein belongs to the allantoicase family.

It catalyses the reaction allantoate + H2O = (S)-ureidoglycolate + urea. It functions in the pathway nitrogen metabolism; (S)-allantoin degradation; (S)-ureidoglycolate from allantoate (aminidohydrolase route): step 1/1. The chain is Probable allantoicase from Ralstonia nicotianae (strain ATCC BAA-1114 / GMI1000) (Ralstonia solanacearum).